Here is a 349-residue protein sequence, read N- to C-terminus: UDP-3-O-acylglucosamine N-acyltransferase (349 aa).

His-248 (proton acceptor) is an active-site residue.

This sequence belongs to the transferase hexapeptide repeat family. LpxD subfamily. Homotrimer.

It carries out the reaction a UDP-3-O-[(3R)-3-hydroxyacyl]-alpha-D-glucosamine + a (3R)-hydroxyacyl-[ACP] = a UDP-2-N,3-O-bis[(3R)-3-hydroxyacyl]-alpha-D-glucosamine + holo-[ACP] + H(+). The protein operates within bacterial outer membrane biogenesis; LPS lipid A biosynthesis. Catalyzes the N-acylation of UDP-3-O-acylglucosamine using 3-hydroxyacyl-ACP as the acyl donor. Is involved in the biosynthesis of lipid A, a phosphorylated glycolipid that anchors the lipopolysaccharide to the outer membrane of the cell. In Gloeothece citriformis (strain PCC 7424) (Cyanothece sp. (strain PCC 7424)), this protein is UDP-3-O-acylglucosamine N-acyltransferase.